The following is a 132-amino-acid chain: Long-chain acyl-CoA thioesterase FadM (132 aa).

Asp13 is a catalytic residue.

This sequence belongs to the 4-hydroxybenzoyl-CoA thioesterase family. As to quaternary structure, homotetramer.

The enzyme catalyses (3E,5Z)-tetradecadienoyl-CoA + H2O = (3E,5Z)-tetradecadienoate + CoA + H(+). It catalyses the reaction (3E,5Z)-dodecadienoyl-CoA + H2O = (3E,5Z)-dodecadienoate + CoA + H(+). The catalysed reaction is (9Z)-octadecenoyl-CoA + H2O = (9Z)-octadecenoate + CoA + H(+). It carries out the reaction octadecanoyl-CoA + H2O = octadecanoate + CoA + H(+). The enzyme catalyses hexadecanoyl-CoA + H2O = hexadecanoate + CoA + H(+). It catalyses the reaction (3S)-hydroxytetradecanoyl-CoA + H2O = (3S)-hydroxytetradecanoate + CoA + H(+). The catalysed reaction is tetradecanoyl-CoA + H2O = tetradecanoate + CoA + H(+). Long-chain acyl-CoA thioesterase that could be involved in beta-oxidation of fatty acids. Is most active with 3,5-tetradecadienoyl-CoA, a metabolite of oleic acid that is hydrolyzed during oleate beta-oxidation, but can also use other substrates such as 3,5-dodecadienoyl-CoA, 9-cis-octadecenoyl-CoA, octadecanoyl-CoA, hexadecanoyl-CoA, 3-hydroxytetradecanoyl-CoA and tetradecanoyl-CoA. This Escherichia coli (strain K12) protein is Long-chain acyl-CoA thioesterase FadM.